Reading from the N-terminus, the 311-residue chain is Olfactory receptor 8G1 (311 aa).

The Extracellular segment spans residues 1–25; that stretch reads MSGENNSSVTEFILAGLSEQPELQL. N-linked (GlcNAc...) asparagine glycosylation is found at Asn-5 and Asn-6. A helical transmembrane segment spans residues 26–46; sequence PLFLLFLGIYVVTVVGNLGMT. Residues 47-54 are Cytoplasmic-facing; the sequence is TLIWLSSH. Residues 55-75 form a helical membrane-spanning segment; it reads LHTPMYYFLSSLSFIDFCHST. Topologically, residues 76-99 are extracellular; it reads VITPKMLVNFVTEKNIISYPECMT. A disulfide bridge links Cys-97 with Cys-189. A helical transmembrane segment spans residues 100–120; it reads QLYFFLVFAIAECHMLAAMAY. The Cytoplasmic segment spans residues 121-139; it reads DRYMAICSPLLYSVIISNK. The chain crosses the membrane as a helical span at residues 140–160; sequence ACFSLILGVYIIGLVCASVHT. Residues 161–197 are Extracellular-facing; that stretch reads GCMFRVQFCKFDLINHYFCDLLPLLKLSCSSIYVNKL. A helical membrane pass occupies residues 198-217; the sequence is LILCVGAFNILVPSLTILCS. Residues 218-237 lie on the Cytoplasmic side of the membrane; that stretch reads YIFIIASILHIRSTEGRSKA. A helical membrane pass occupies residues 238–258; it reads FSTCSSHMLAVVIFFGSAAFM. Over 259 to 271 the chain is Extracellular; it reads YLQPSSISSMDQG. Residues 272–292 form a helical membrane-spanning segment; that stretch reads KVSSVFYTIIVPMLNPLIYSL. Over 293–311 the chain is Cytoplasmic; the sequence is RNKDVHVSLKKMLQRRTLL.

The protein belongs to the G-protein coupled receptor 1 family.

Its subcellular location is the cell membrane. Its function is as follows. Odorant receptor. The polypeptide is Olfactory receptor 8G1 (OR8G1) (Homo sapiens (Human)).